The primary structure comprises 2259 residues: Protein Ycf2 (2259 aa).

1556–1563 (GSQETGRS) is a binding site for ATP.

The protein belongs to the Ycf2 family.

It is found in the plastid. The protein localises to the chloroplast stroma. Functionally, probable ATPase of unknown function. Its presence in a non-photosynthetic plant (Epifagus virginiana) and experiments in tobacco indicate that it has an essential function which is probably not related to photosynthesis. The polypeptide is Protein Ycf2 (Physcomitrium patens (Spreading-leaved earth moss)).